We begin with the raw amino-acid sequence, 901 residues long: Protein translocase subunit SecA (901 aa).

ATP-binding positions include Gln-87, 105-109, and Asp-512; that span reads GEGKT. Residues 868–901 form a disordered region; it reads AALAAQTGERKVGRNDPCPCGSGKKYKQCHGRLQ. Zn(2+) contacts are provided by Cys-885, Cys-887, Cys-896, and His-897. The segment covering 891–901 has biased composition (basic residues); it reads KKYKQCHGRLQ.

The protein belongs to the SecA family. As to quaternary structure, monomer and homodimer. Part of the essential Sec protein translocation apparatus which comprises SecA, SecYEG and auxiliary proteins SecDF-YajC and YidC. The cofactor is Zn(2+).

The protein resides in the cell inner membrane. It is found in the cytoplasm. It catalyses the reaction ATP + H2O + cellular proteinSide 1 = ADP + phosphate + cellular proteinSide 2.. Part of the Sec protein translocase complex. Interacts with the SecYEG preprotein conducting channel. Has a central role in coupling the hydrolysis of ATP to the transfer of proteins into and across the cell membrane, serving both as a receptor for the preprotein-SecB complex and as an ATP-driven molecular motor driving the stepwise translocation of polypeptide chains across the membrane. This Escherichia coli O45:K1 (strain S88 / ExPEC) protein is Protein translocase subunit SecA.